Consider the following 350-residue polypeptide: Phosphoribosylformylglycinamidine cyclo-ligase (350 aa).

This sequence belongs to the AIR synthase family.

It is found in the cytoplasm. It catalyses the reaction 2-formamido-N(1)-(5-O-phospho-beta-D-ribosyl)acetamidine + ATP = 5-amino-1-(5-phospho-beta-D-ribosyl)imidazole + ADP + phosphate + H(+). It participates in purine metabolism; IMP biosynthesis via de novo pathway; 5-amino-1-(5-phospho-D-ribosyl)imidazole from N(2)-formyl-N(1)-(5-phospho-D-ribosyl)glycinamide: step 2/2. This is Phosphoribosylformylglycinamidine cyclo-ligase from Nitratidesulfovibrio vulgaris (strain DSM 19637 / Miyazaki F) (Desulfovibrio vulgaris).